The sequence spans 100 residues: NADH-quinone oxidoreductase subunit K (100 aa).

3 helical membrane-spanning segments follow: residues isoleucine 2–valine 22, leucine 28–valine 48, and valine 60–leucine 80.

Belongs to the complex I subunit 4L family. In terms of assembly, NDH-1 is composed of 13 different subunits. Subunits NuoA, H, J, K, L, M, N constitute the membrane sector of the complex.

The protein resides in the cell inner membrane. It catalyses the reaction a quinone + NADH + 5 H(+)(in) = a quinol + NAD(+) + 4 H(+)(out). Functionally, NDH-1 shuttles electrons from NADH, via FMN and iron-sulfur (Fe-S) centers, to quinones in the respiratory chain. The immediate electron acceptor for the enzyme in this species is believed to be ubiquinone. Couples the redox reaction to proton translocation (for every two electrons transferred, four hydrogen ions are translocated across the cytoplasmic membrane), and thus conserves the redox energy in a proton gradient. In Erwinia tasmaniensis (strain DSM 17950 / CFBP 7177 / CIP 109463 / NCPPB 4357 / Et1/99), this protein is NADH-quinone oxidoreductase subunit K.